The sequence spans 105 residues: ATP synthase subunit c (105 aa).

The next 3 helical transmembrane spans lie at 3-23 (FLSL…GGMG), 32-52 (SILG…IGMG), and 78-98 (VAMA…IIAI).

Belongs to the ATPase C chain family. As to quaternary structure, F-type ATPases have 2 components, F(1) - the catalytic core - and F(0) - the membrane proton channel. F(1) has five subunits: alpha(3), beta(3), gamma(1), delta(1), epsilon(1). F(0) has three main subunits: a(1), b(2) and c(10-14). The alpha and beta chains form an alternating ring which encloses part of the gamma chain. F(1) is attached to F(0) by a central stalk formed by the gamma and epsilon chains, while a peripheral stalk is formed by the delta and b chains.

The protein resides in the cell inner membrane. F(1)F(0) ATP synthase produces ATP from ADP in the presence of a proton or sodium gradient. F-type ATPases consist of two structural domains, F(1) containing the extramembraneous catalytic core and F(0) containing the membrane proton channel, linked together by a central stalk and a peripheral stalk. During catalysis, ATP synthesis in the catalytic domain of F(1) is coupled via a rotary mechanism of the central stalk subunits to proton translocation. In terms of biological role, key component of the F(0) channel; it plays a direct role in translocation across the membrane. A homomeric c-ring of between 10-14 subunits forms the central stalk rotor element with the F(1) delta and epsilon subunits. The sequence is that of ATP synthase subunit c from Helicobacter pylori (strain Shi470).